A 51-amino-acid polypeptide reads, in one-letter code: Large ribosomal subunit protein eL39 (51 aa).

It belongs to the eukaryotic ribosomal protein eL39 family. As to quaternary structure, part of the 50S ribosomal subunit.

The protein is Large ribosomal subunit protein eL39 of Pyrococcus furiosus (strain ATCC 43587 / DSM 3638 / JCM 8422 / Vc1).